Consider the following 826-residue polypeptide: MRCQVWNVIELNLSSSCLHGLLNSKSNIFSLQNLRFLDLSNNHFSGQILSSLGNFSSLTTLDLSENHFSGQIPSSLGNLLHLTSLDLTDNNFVGDIPTSLGNLSHLTLLLLGANNLVGEIPFSLGNLSHLTDLTLCENDLAGEIPSSFENLSHLTNLDLSQNNLVGEIPSFFGSFNQLVSLAVEENEFTGNFLLILLNLTNLSDLSLSRNQFTGTLPPNMSSLSNLVLFYADANAFTGTIPSSLLNIPSLSCFDLSDNQLNGNIEFGNISSSLSDLLLGNNNFRGSIHKSISKLVNLYTLDLSHFNTQGSINFSIFSDLKLLVDLHLSHLNTTTTIDLNTFLSSFKSLDTLDLSGNHISAINKSSVSNPVTTARPGLGLTNPLLLSRFNLSGCGVTEFPEFLRTQQTMEILDISNNKINGQVPGWLWTLPTLDYVNLSNNTFTGFQRLMVPSSWQPSMNYFSGANNNFTGNLPAFICAFTLQALHLRKNHLSGVFPENISESLKSLDVGHNQLVGKLPRSLVRISSLEVLNVENNKINDTFPFWLSSLEELQVLVLRSNAFHGPMQQTRFPNLRIIDVSHNHFNGTLPSDFFVNWTVMFLLGENEDQFNGEYMGTSYYSDSIVVMNKGLEMEMVRILKIFTSVDFSRNKFEGEIPKSIGLLKELHVLNLSSNTFTGHIPSSMGKLRELESLDVAQNKLSGDIPQDLGDLSYLAYMNFSHNQLVGPLPGGTQFLTQNCSSFEENAGHFGPSLEKVCDIHGKTMQESEMPGSEEDEEEVISWIAATIGFIPGIAFGLMMGYILVCYKPEWFMNVFGKNKSRSTSSTTR.

Residues 1–780 (MRCQVWNVIE…EEDEEEVISW (780 aa)) are Extracellular-facing. LRR repeat units lie at residues 5–31 (VWNVIELNLSSSCLHGLLNSKSNIFSL), 32–54 (QNLRFLDLSNNHFSGQILSSLGN), 55–79 (FSSLTTLDLSENHFSGQIPSSLGNL), 81–103 (HLTSLDLTDNNFVGDIPTSLGNL), 104–127 (SHLTLLLLGANNLVGEIPFSLGNL), 128–150 (SHLTDLTLCENDLAGEIPSSFEN), and 151–177 (LSHLTNLDLSQNNLVGEIPSFFGSFNQ). Residues Asn12 and Asn54 are each glycosylated (N-linked (GlcNAc...) asparagine). 3 N-linked (GlcNAc...) asparagine glycosylation sites follow: Asn102, Asn126, and Asn150. An LRR 8; degenerate repeat occupies 178–198 (LVSLAVEENEFTGNFLLILLN). Asn198, Asn201, and Asn219 each carry an N-linked (GlcNAc...) asparagine glycan. LRR repeat units follow at residues 199-223 (LTNLSDLSLSRNQFTGTLPPNMSSL), 225-247 (NLVLFYADANAFTGTIPSSLLNI), 248-271 (PSLSCFDLSDNQLNGNIEFGNISS), 273-294 (LSDLLLGNNNFRGSIHKSISKL), 296-318 (NLYTLDLSHFNTQGSINFSIFSD), 319-343 (LKLLVDLHLSHLNTTTTIDLNTFLS), 345-368 (FKSLDTLDLSGNHISAINKSSVSN), 382-405 (PLLLSRFNLSGCGVTEFPEFLRTQ), 406-429 (QTMEILDISNNKINGQVPGWLWTL), 430-452 (PTLDYVNLSNNTFTGFQRLMVPS), 455-478 (QPSMNYFSGANNNFTGNLPAFICA), 479-500 (FTLQALHLRKNHLSGVFPENIS), 501-524 (ESLKSLDVGHNQLVGKLPRSLVRI), 525-550 (SSLEVLNVENNKINDTFPFWLSSLEE), 552-570 (QVLVLRSNAFHGPMQQTRF), 571-594 (PNLRIIDVSHNHFNGTLPSDFFVN), 637-661 (LKIFTSVDFSRNKFEGEIPKSIGLL), 662-685 (KELHVLNLSSNTFTGHIPSSMGKL), 686-709 (RELESLDVAQNKLSGDIPQDLGDL), and 711-734 (YLAYMNFSHNQLVGPLPGGTQFLT). Residue Asn268 is glycosylated (N-linked (GlcNAc...) asparagine). 4 N-linked (GlcNAc...) asparagine glycosylation sites follow: Asn312, Asn331, Asn362, and Asn389. 4 N-linked (GlcNAc...) asparagine glycosylation sites follow: Asn436, Asn439, Asn467, and Asn498. Residue Asn538 is glycosylated (N-linked (GlcNAc...) asparagine). N-linked (GlcNAc...) asparagine glycans are attached at residues Asn584 and Asn594. Asn668 carries an N-linked (GlcNAc...) asparagine glycan. 2 N-linked (GlcNAc...) asparagine glycosylation sites follow: Asn716 and Asn736. Residues 781–801 (IAATIGFIPGIAFGLMMGYIL) form a helical membrane-spanning segment. The Cytoplasmic segment spans residues 802–826 (VCYKPEWFMNVFGKNKSRSTSSTTR).

It belongs to the RLP family.

It localises to the cell membrane. The polypeptide is Receptor-like protein 18 (Arabidopsis thaliana (Mouse-ear cress)).